A 413-amino-acid polypeptide reads, in one-letter code: Serine hydroxymethyltransferase (413 aa).

(6S)-5,6,7,8-tetrahydrofolate contacts are provided by residues Leu117 and 121–123; that span reads GHL. At Lys226 the chain carries N6-(pyridoxal phosphate)lysine. (6S)-5,6,7,8-tetrahydrofolate contacts are provided by residues Glu241 and 349–351; that span reads SPF.

It belongs to the SHMT family. As to quaternary structure, homodimer. The cofactor is pyridoxal 5'-phosphate.

The protein resides in the cytoplasm. It catalyses the reaction (6R)-5,10-methylene-5,6,7,8-tetrahydrofolate + glycine + H2O = (6S)-5,6,7,8-tetrahydrofolate + L-serine. It participates in one-carbon metabolism; tetrahydrofolate interconversion. Its pathway is amino-acid biosynthesis; glycine biosynthesis; glycine from L-serine: step 1/1. Catalyzes the reversible interconversion of serine and glycine with tetrahydrofolate (THF) serving as the one-carbon carrier. This reaction serves as the major source of one-carbon groups required for the biosynthesis of purines, thymidylate, methionine, and other important biomolecules. Also exhibits THF-independent aldolase activity toward beta-hydroxyamino acids, producing glycine and aldehydes, via a retro-aldol mechanism. This Halalkalibacterium halodurans (strain ATCC BAA-125 / DSM 18197 / FERM 7344 / JCM 9153 / C-125) (Bacillus halodurans) protein is Serine hydroxymethyltransferase.